The sequence spans 372 residues: Tyrosine--tRNA ligase 1 (372 aa).

Residues Tyr-37, Tyr-169, Gln-173, Asp-176, and Gln-191 each contribute to the L-tyrosine site. The 'KMSKS' region signature appears at 246–250 (KMSKS). An ATP-binding site is contributed by Lys-249.

This sequence belongs to the class-I aminoacyl-tRNA synthetase family. TyrS type 4 subfamily. Homodimer.

It is found in the cytoplasm. It catalyses the reaction tRNA(Tyr) + L-tyrosine + ATP = L-tyrosyl-tRNA(Tyr) + AMP + diphosphate + H(+). Catalyzes the attachment of tyrosine to tRNA(Tyr) in a two-step reaction: tyrosine is first activated by ATP to form Tyr-AMP and then transferred to the acceptor end of tRNA(Tyr). This is Tyrosine--tRNA ligase 1 from Pyrobaculum aerophilum (strain ATCC 51768 / DSM 7523 / JCM 9630 / CIP 104966 / NBRC 100827 / IM2).